Consider the following 145-residue polypeptide: Deoxyuridine 5'-triphosphate nucleotidohydrolase (145 aa).

Belongs to the dUTPase family. Mg(2+) serves as cofactor.

It catalyses the reaction dUTP + H2O = dUMP + diphosphate + H(+). In terms of biological role, this enzyme is involved in nucleotide metabolism: it produces dUMP, the immediate precursor of thymidine nucleotides and it decreases the intracellular concentration of dUTP so that uracil cannot be incorporated into DNA. In Fowlpox virus (strain NVSL) (FPV), this protein is Deoxyuridine 5'-triphosphate nucleotidohydrolase (DUT).